We begin with the raw amino-acid sequence, 132 residues long: Large ribosomal subunit protein bL12 (132 aa).

It belongs to the bacterial ribosomal protein bL12 family. In terms of assembly, homodimer. Part of the ribosomal stalk of the 50S ribosomal subunit. Forms a multimeric L10(L12)X complex, where L10 forms an elongated spine to which 2 to 4 L12 dimers bind in a sequential fashion. Binds GTP-bound translation factors.

Functionally, forms part of the ribosomal stalk which helps the ribosome interact with GTP-bound translation factors. Is thus essential for accurate translation. The sequence is that of Large ribosomal subunit protein bL12 from Chloroflexus aggregans (strain MD-66 / DSM 9485).